We begin with the raw amino-acid sequence, 23 residues long: Malate dehydrogenase (23 aa).

Asn-7 lines the NAD(+) pocket. Arg-23 is a substrate binding site.

It belongs to the LDH/MDH superfamily. MDH type 1 family. Homodimer.

It catalyses the reaction (S)-malate + NAD(+) = oxaloacetate + NADH + H(+). This Pseudotsuga menziesii (Douglas-fir) protein is Malate dehydrogenase.